Reading from the N-terminus, the 486-residue chain is Membrane-bound lytic murein transglycosylase F (486 aa).

Residues 1-29 (MFSPTALRPRYAKWLIATGLFLMLSGCVD) form the signal peptide. The non-LT domain stretch occupies residues 30–267 (KPNTLERVKE…RLKDRYYGHV (238 aa)). An LT domain region spans residues 268–486 (DVLGYMGATT…SKPAQEPAPL (219 aa)). Glu314 is an active-site residue.

This sequence in the N-terminal section; belongs to the bacterial solute-binding protein 3 family. In the C-terminal section; belongs to the transglycosylase Slt family.

Its subcellular location is the cell outer membrane. It catalyses the reaction Exolytic cleavage of the (1-&gt;4)-beta-glycosidic linkage between N-acetylmuramic acid (MurNAc) and N-acetylglucosamine (GlcNAc) residues in peptidoglycan, from either the reducing or the non-reducing ends of the peptidoglycan chains, with concomitant formation of a 1,6-anhydrobond in the MurNAc residue.. In terms of biological role, murein-degrading enzyme that degrades murein glycan strands and insoluble, high-molecular weight murein sacculi, with the concomitant formation of a 1,6-anhydromuramoyl product. Lytic transglycosylases (LTs) play an integral role in the metabolism of the peptidoglycan (PG) sacculus. Their lytic action creates space within the PG sacculus to allow for its expansion as well as for the insertion of various structures such as secretion systems and flagella. The sequence is that of Membrane-bound lytic murein transglycosylase F from Pseudomonas fluorescens (strain Pf0-1).